The chain runs to 630 residues: Probable potassium transport system protein Kup (630 aa).

The next 12 helical transmembrane spans lie at 17-37 (LAIA…LYSL), 51-71 (PSAI…VVGI), 105-125 (ITGL…GDAV), 144-164 (PQLS…LFWI), 175-195 (LFGP…IYHI), 218-238 (VLLA…AEAL), 255-275 (YVLV…LLLL), 283-303 (PFFL…STVA), 344-364 (IYVP…VIGF), 374-394 (YGIA…VVMV), 402-422 (LLVA…FGAN), and 428-448 (QGGW…MTWY).

It belongs to the HAK/KUP transporter (TC 2.A.72) family.

It localises to the cell inner membrane. The enzyme catalyses K(+)(in) + H(+)(in) = K(+)(out) + H(+)(out). Its function is as follows. Transport of potassium into the cell. Likely operates as a K(+):H(+) symporter. The sequence is that of Probable potassium transport system protein Kup from Burkholderia mallei (strain NCTC 10247).